The sequence spans 304 residues: Glycine--tRNA ligase alpha subunit (304 aa).

This sequence belongs to the class-II aminoacyl-tRNA synthetase family. As to quaternary structure, tetramer of two alpha and two beta subunits.

It localises to the cytoplasm. It carries out the reaction tRNA(Gly) + glycine + ATP = glycyl-tRNA(Gly) + AMP + diphosphate. In Yersinia enterocolitica serotype O:8 / biotype 1B (strain NCTC 13174 / 8081), this protein is Glycine--tRNA ligase alpha subunit.